Here is a 177-residue protein sequence, read N- to C-terminus: Shikimate kinase (177 aa).

17–22 is an ATP binding site; the sequence is GVGKTT. Mg(2+) is bound at residue Thr-21. Substrate contacts are provided by Asp-39, Arg-63, and Gly-86. Arg-125 is an ATP binding site. Arg-143 is a binding site for substrate. Arg-159 contacts ATP.

The protein belongs to the shikimate kinase family. In terms of assembly, monomer. The cofactor is Mg(2+).

Its subcellular location is the cytoplasm. It carries out the reaction shikimate + ATP = 3-phosphoshikimate + ADP + H(+). The protein operates within metabolic intermediate biosynthesis; chorismate biosynthesis; chorismate from D-erythrose 4-phosphate and phosphoenolpyruvate: step 5/7. Catalyzes the specific phosphorylation of the 3-hydroxyl group of shikimic acid using ATP as a cosubstrate. In Bacillus licheniformis (strain ATCC 14580 / DSM 13 / JCM 2505 / CCUG 7422 / NBRC 12200 / NCIMB 9375 / NCTC 10341 / NRRL NRS-1264 / Gibson 46), this protein is Shikimate kinase.